Reading from the N-terminus, the 981-residue chain is Beta-glucuronidase (981 aa).

Residue glutamate 500 is the Nucleophile of the active site. The Mg(2+) site is built by asparagine 561, tryptophan 562, isoleucine 563, serine 581, and glutamate 583.

This sequence belongs to the glycosyl hydrolase 2 family.

The protein localises to the periplasm. The enzyme catalyses a beta-D-glucuronoside + H2O = D-glucuronate + an alcohol. Functionally, beta-glucuronidase involved in ulvan degradation. Ulvan is the main polysaccharide component of the Ulvales (green seaweed) cell wall. It is composed of disaccharide building blocks comprising 3-sulfated rhamnose (Rha3S) linked to D-glucuronic acid (GlcA), L-iduronic acid (IduA), or D-xylose (Xyl). Beta-glucuronidase removes GlcA side chains present on some O2 residues of Rha3S. Can remove the GlcA side chains from polymeric ulvan or from smaller oligomers. This is Beta-glucuronidase from Formosa agariphila (strain DSM 15362 / KCTC 12365 / LMG 23005 / KMM 3901 / M-2Alg 35-1).